A 128-amino-acid chain; its full sequence is Small ribosomal subunit protein bS16 (128 aa).

A disordered region spans residues 107-128; that stretch reads AAEAKAAAANESDDSGTDSTES. The segment covering 117-128 has biased composition (acidic residues); the sequence is ESDDSGTDSTES.

The protein belongs to the bacterial ribosomal protein bS16 family.

The polypeptide is Small ribosomal subunit protein bS16 (Synechococcus sp. (strain CC9311)).